The chain runs to 1177 residues: uncharacterized protein (1177 aa).

The first 26 residues, 1–26 (MKKLLKKSKFWWFLLCGLSVSTILVA), serve as a signal peptide directing secretion. Residue Cys-27 is the site of N-palmitoyl cysteine attachment. Cys-27 carries S-diacylglycerol cysteine lipidation.

Belongs to the MG307/MG309/MG338 family.

Its subcellular location is the cell membrane. This is an uncharacterized protein from Mycoplasma genitalium (strain ATCC 33530 / DSM 19775 / NCTC 10195 / G37) (Mycoplasmoides genitalium).